A 225-amino-acid chain; its full sequence is PKHD-type hydroxylase YbiX (225 aa).

Residues 78 to 177 (TLSTPLFNRY…RVASFMWIQS (100 aa)) form the Fe2OG dioxygenase domain. The Fe cation site is built by His-96, Asp-98, and His-158. Arg-168 lines the 2-oxoglutarate pocket.

The cofactor is Fe(2+). L-ascorbate serves as cofactor.

The polypeptide is PKHD-type hydroxylase YbiX (Escherichia coli O45:K1 (strain S88 / ExPEC)).